The primary structure comprises 57 residues: Large ribosomal subunit protein bL32 (57 aa).

Positions 1-19 are enriched in basic residues; sequence MATPKFKKSRANTHSRRSQ. The interval 1–20 is disordered; that stretch reads MATPKFKKSRANTHSRRSQW.

The protein belongs to the bacterial ribosomal protein bL32 family.

This Corynebacterium aurimucosum (strain ATCC 700975 / DSM 44827 / CIP 107346 / CN-1) (Corynebacterium nigricans) protein is Large ribosomal subunit protein bL32.